A 321-amino-acid chain; its full sequence is Cytochrome c biogenesis protein CcsA (321 aa).

The next 8 membrane-spanning stretches (helical) occupy residues 9-29 (ILTH…LMTL), 44-64 (GLIA…IYSG), 71-91 (LYES…VPYF), 97-117 (LLST…TSGL), 143-163 (MILS…LLVI), 227-247 (VISL…VWAN), 261-275 (TWAF…IYLH), and 288-308 (AIVA…VNLL).

This sequence belongs to the CcmF/CycK/Ccl1/NrfE/CcsA family. May interact with Ccs1.

The protein localises to the plastid. It is found in the chloroplast thylakoid membrane. Functionally, required during biogenesis of c-type cytochromes (cytochrome c6 and cytochrome f) at the step of heme attachment. This chain is Cytochrome c biogenesis protein CcsA, found in Nandina domestica (Heavenly bamboo).